A 164-amino-acid polypeptide reads, in one-letter code: Microfibrillar-associated protein 5 (164 aa).

The signal sequence occupies residues M1–G28. The short motif at R30–D32 is the Cell attachment site element. Residue N70 is glycosylated (N-linked (GlcNAc...) asparagine).

It belongs to the MFAP family. Interacts with TGFB2. Interacts with BMP2. Interacts with FBN1 (via N-terminal domain) and FBN2. Post-translationally, forms intermolecular disulfide bonds either with other MAGP-2 molecules or with other components of the microfibrils.

It localises to the secreted. The protein localises to the extracellular space. Its subcellular location is the extracellular matrix. May play a role in hematopoiesis. In the cardiovascular system, could regulate growth factors or participate in cell signaling in maintaining large vessel integrity. Component of the elastin-associated microfibrils. The chain is Microfibrillar-associated protein 5 (Mfap5) from Mus musculus (Mouse).